The sequence spans 269 residues: Ribosomal RNA large subunit methyltransferase E (269 aa).

Residues glycine 58, tryptophan 60, aspartate 78, aspartate 96, and aspartate 120 each contribute to the S-adenosyl-L-methionine site. Lysine 160 functions as the Proton acceptor in the catalytic mechanism. The disordered stretch occupies residues 234–269 (HEKKEGNETSDNDEDNNKNGLMIKKIKELRGKRSKL). Over residues 258-269 (KIKELRGKRSKL) the composition is skewed to basic and acidic residues.

This sequence belongs to the class I-like SAM-binding methyltransferase superfamily. RNA methyltransferase RlmE family.

The protein resides in the cytoplasm. It carries out the reaction uridine(2552) in 23S rRNA + S-adenosyl-L-methionine = 2'-O-methyluridine(2552) in 23S rRNA + S-adenosyl-L-homocysteine + H(+). Functionally, specifically methylates the uridine in position 2552 of 23S rRNA at the 2'-O position of the ribose in the fully assembled 50S ribosomal subunit. The chain is Ribosomal RNA large subunit methyltransferase E from Methanococcus aeolicus (strain ATCC BAA-1280 / DSM 17508 / OCM 812 / Nankai-3).